A 193-amino-acid chain; its full sequence is Acyl carrier protein phosphodiesterase (193 aa).

It belongs to the AcpH family.

The enzyme catalyses holo-[ACP] + H2O = apo-[ACP] + (R)-4'-phosphopantetheine + H(+). Functionally, converts holo-ACP to apo-ACP by hydrolytic cleavage of the phosphopantetheine prosthetic group from ACP. This chain is Acyl carrier protein phosphodiesterase, found in Klebsiella pneumoniae subsp. pneumoniae (strain ATCC 700721 / MGH 78578).